The sequence spans 141 residues: uncharacterized protein (141 aa).

A run of 2 helical transmembrane segments spans residues 12 to 32 (GIAGCGAGGVVMAIASVTLVT) and 35 to 55 (PGRVLTGVAALGLILFASATW).

It localises to the cell membrane. This is an uncharacterized protein from Mycobacterium tuberculosis (strain CDC 1551 / Oshkosh).